The sequence spans 342 residues: Ferrochelatase (342 aa).

Residues histidine 188 and glutamate 268 each contribute to the Fe cation site.

Belongs to the ferrochelatase family.

It is found in the cytoplasm. The enzyme catalyses heme b + 2 H(+) = protoporphyrin IX + Fe(2+). It functions in the pathway porphyrin-containing compound metabolism; protoheme biosynthesis; protoheme from protoporphyrin-IX: step 1/1. Functionally, catalyzes the ferrous insertion into protoporphyrin IX. The chain is Ferrochelatase from Rickettsia prowazekii (strain Madrid E).